A 130-amino-acid chain; its full sequence is Small ribosomal subunit protein uS11c (130 aa).

It belongs to the universal ribosomal protein uS11 family. In terms of assembly, part of the 30S ribosomal subunit.

Its subcellular location is the plastid. The protein resides in the chloroplast. This is Small ribosomal subunit protein uS11c from Adiantum capillus-veneris (Maidenhair fern).